Consider the following 354-residue polypeptide: 4-hydroxy-3-methylbut-2-en-1-yl diphosphate synthase (flavodoxin) (354 aa).

Residues Cys265, Cys268, Cys300, and Glu307 each contribute to the [4Fe-4S] cluster site.

This sequence belongs to the IspG family. [4Fe-4S] cluster serves as cofactor.

It carries out the reaction (2E)-4-hydroxy-3-methylbut-2-enyl diphosphate + oxidized [flavodoxin] + H2O + 2 H(+) = 2-C-methyl-D-erythritol 2,4-cyclic diphosphate + reduced [flavodoxin]. It participates in isoprenoid biosynthesis; isopentenyl diphosphate biosynthesis via DXP pathway; isopentenyl diphosphate from 1-deoxy-D-xylulose 5-phosphate: step 5/6. Converts 2C-methyl-D-erythritol 2,4-cyclodiphosphate (ME-2,4cPP) into 1-hydroxy-2-methyl-2-(E)-butenyl 4-diphosphate. This chain is 4-hydroxy-3-methylbut-2-en-1-yl diphosphate synthase (flavodoxin), found in Hydrogenobaculum sp. (strain Y04AAS1).